Here is a 198-residue protein sequence, read N- to C-terminus: Tumor necrosis factor receptor superfamily member 22 (198 aa).

The Cytoplasmic portion of the chain corresponds to 1–20 (MFGFFCSLVSSLSRWFLWRR). The helical; Signal-anchor for type II membrane protein transmembrane segment at 21 to 41 (LLLLLLLLLLNLPLQVKFAML) threads the bilayer. Topologically, residues 42–198 (ELHSFKCPAG…SVVVFRIIRR (157 aa)) are extracellular. TNFR-Cys repeat units follow at residues 47–82 (KCPA…QGQC), 84–124 (KCHP…DRKC), and 125–165 (QCRT…NTVC). Disulfide bonds link C48/C59, C60/C73, C63/C82, C85/C100, C103/C116, C106/C124, C126/C141, C144/C157, and C147/C165. An N-linked (GlcNAc...) asparagine glycan is attached at N62. Residue N158 is glycosylated (N-linked (GlcNAc...) asparagine).

In terms of tissue distribution, ubiquitous.

It localises to the cell membrane. Its subcellular location is the secreted. In terms of biological role, receptor for the cytotoxic ligand TNFSF10/TRAIL. Lacks a cytoplasmic death domain and hence is not capable of inducing apoptosis. Protects cells against TRAIL mediated apoptosis possibly through ligand competition. Cannot induce the NF-kappa-B pathway. In Mus musculus (Mouse), this protein is Tumor necrosis factor receptor superfamily member 22 (Tnfrsf22).